Reading from the N-terminus, the 262-residue chain is Hydroxyethylthiazole kinase (262 aa).

Met-43 contacts substrate. ATP is bound by residues Arg-118 and Thr-164. Ala-191 serves as a coordination point for substrate.

This sequence belongs to the Thz kinase family. The cofactor is Mg(2+).

It catalyses the reaction 5-(2-hydroxyethyl)-4-methylthiazole + ATP = 4-methyl-5-(2-phosphooxyethyl)-thiazole + ADP + H(+). It functions in the pathway cofactor biosynthesis; thiamine diphosphate biosynthesis; 4-methyl-5-(2-phosphoethyl)-thiazole from 5-(2-hydroxyethyl)-4-methylthiazole: step 1/1. Its function is as follows. Catalyzes the phosphorylation of the hydroxyl group of 4-methyl-5-beta-hydroxyethylthiazole (THZ). This is Hydroxyethylthiazole kinase from Cereibacter sphaeroides (strain ATCC 17029 / ATH 2.4.9) (Rhodobacter sphaeroides).